Here is a 311-residue protein sequence, read N- to C-terminus: MSNSIVIQTNSTVIEDMKQQYKHSLSPKTPQGGIFMAKVPSCTITAYKSGKVMFQGGRAEAEAARWQTVSQTPKTAVKKSVDSHRFAPPASIGTMSIVGSDEVGTGDFFGPMTVVAVYVDAKQIPLLKELGVKDSKNLNDEQITAIAKQLLHVVPYSSLVLHNEKYNELFDKGNNQGKLKALLHNKAITNLLAKMAPTKPEGVLIDQFTQPDTYYKYLAKQKQVQRENVYFATKGESVHLAVAAASILARYSFVKQFNELSKKAGMPLPKGAGKQVDIAAAKLIQKLGKERLPEFVKLHFANTEKAFRLLK.

The region spanning 95–311 (MSIVGSDEVG…NTEKAFRLLK (217 aa)) is the RNase H type-2 domain. Residues aspartate 101, glutamate 102, and aspartate 206 each contribute to the a divalent metal cation site.

It belongs to the RNase HII family. RnhC subfamily. It depends on Mn(2+) as a cofactor. The cofactor is Mg(2+).

It localises to the cytoplasm. The catalysed reaction is Endonucleolytic cleavage to 5'-phosphomonoester.. Functionally, endonuclease that specifically degrades the RNA of RNA-DNA hybrids. The sequence is that of Ribonuclease HIII from Bacillus cereus (strain 03BB102).